We begin with the raw amino-acid sequence, 196 residues long: Small ribosomal subunit protein uS4c (196 aa).

In terms of domain architecture, S4 RNA-binding spans 82-143 (MRLDNILFRL…KQKSKALIQN (62 aa)).

The protein belongs to the universal ribosomal protein uS4 family. Part of the 30S ribosomal subunit. Contacts protein S5. The interaction surface between S4 and S5 is involved in control of translational fidelity.

It is found in the plastid. The protein resides in the chloroplast. Its function is as follows. One of the primary rRNA binding proteins, it binds directly to 16S rRNA where it nucleates assembly of the body of the 30S subunit. With S5 and S12 plays an important role in translational accuracy. This is Small ribosomal subunit protein uS4c (rps4) from Patersonia sp. (strain Lejeune 1997).